The chain runs to 85 residues: Putative membrane protein insertion efficiency factor (85 aa).

The protein belongs to the UPF0161 family.

The protein resides in the cell inner membrane. Functionally, could be involved in insertion of integral membrane proteins into the membrane. This Dictyoglomus thermophilum (strain ATCC 35947 / DSM 3960 / H-6-12) protein is Putative membrane protein insertion efficiency factor.